Consider the following 683-residue polypeptide: Eukaryotic translation initiation factor 3 subunit B (683 aa).

Positions 1-25 (MAKKKGEEQDFEEEPNFDDPEGFVD) are disordered. A compositionally biased stretch (acidic residues) spans 9 to 25 (QDFEEEPNFDDPEGFVD). The RRM domain maps to 49-133 (NVIVVDNIPV…YTLLVNRFAD (85 aa)). WD repeat units follow at residues 199–238 (KRER…KVNK), 240–279 (AHSN…EKRT), 283–321 (DGMS…LLDM), 324–359 (IRVE…TLMA), 435–477 (EVKE…EPVL), and 522–567 (GDHY…KRVN). A coiled-coil region spans residues 611-638 (MTRASKELIEKRAKLREQFTEYRSKRVK).

This sequence belongs to the eIF-3 subunit B family. Component of the eukaryotic translation initiation factor 3 (eIF-3) complex.

Its subcellular location is the cytoplasm. Functionally, RNA-binding component of the eukaryotic translation initiation factor 3 (eIF-3) complex, which is involved in protein synthesis of a specialized repertoire of mRNAs and, together with other initiation factors, stimulates binding of mRNA and methionyl-tRNAi to the 40S ribosome. The eIF-3 complex specifically targets and initiates translation of a subset of mRNAs involved in cell proliferation. The polypeptide is Eukaryotic translation initiation factor 3 subunit B (Anopheles gambiae (African malaria mosquito)).